The sequence spans 906 residues: Protein translocase subunit SecA (906 aa).

ATP-binding positions include Gln86, 104–108 (GEGKT), and Asp499. The disordered stretch occupies residues 862 to 885 (KPVVSRIDPKDRNPDDPTSWGRVS). Residues Cys890, Cys892, Cys901, and His902 each contribute to the Zn(2+) site.

It belongs to the SecA family. Monomer and homodimer. Part of the essential Sec protein translocation apparatus which comprises SecA, SecYEG and auxiliary proteins SecDF-YajC and YidC. The cofactor is Zn(2+).

It localises to the cell inner membrane. It is found in the cytoplasm. The enzyme catalyses ATP + H2O + cellular proteinSide 1 = ADP + phosphate + cellular proteinSide 2.. Its function is as follows. Part of the Sec protein translocase complex. Interacts with the SecYEG preprotein conducting channel. Has a central role in coupling the hydrolysis of ATP to the transfer of proteins into and across the cell membrane, serving both as a receptor for the preprotein-SecB complex and as an ATP-driven molecular motor driving the stepwise translocation of polypeptide chains across the membrane. In Rickettsia massiliae (strain Mtu5), this protein is Protein translocase subunit SecA.